A 213-amino-acid chain; its full sequence is Urease accessory protein UreG (213 aa).

GTP is bound at residue 14-21 (GPVGSGKT).

The protein belongs to the SIMIBI class G3E GTPase family. UreG subfamily. As to quaternary structure, homodimer. UreD, UreF and UreG form a complex that acts as a GTP-hydrolysis-dependent molecular chaperone, activating the urease apoprotein by helping to assemble the nickel containing metallocenter of UreC. The UreE protein probably delivers the nickel.

It localises to the cytoplasm. Facilitates the functional incorporation of the urease nickel metallocenter. This process requires GTP hydrolysis, probably effectuated by UreG. This chain is Urease accessory protein UreG, found in Mesorhizobium japonicum (strain LMG 29417 / CECT 9101 / MAFF 303099) (Mesorhizobium loti (strain MAFF 303099)).